The primary structure comprises 620 residues: Chaperone protein HscA homolog (620 aa).

Belongs to the heat shock protein 70 family.

Chaperone involved in the maturation of iron-sulfur cluster-containing proteins. Has a low intrinsic ATPase activity which is markedly stimulated by HscB. In Pseudomonas syringae pv. tomato (strain ATCC BAA-871 / DC3000), this protein is Chaperone protein HscA homolog.